Here is a 121-residue protein sequence, read N- to C-terminus: MIQTQTYLTVADNSGAKKIMCIRILGGNRKYASIGDVIIGVVKDATPNMPVKRSDVVRAVIMRTKNTIRRKDGMSIRFDDNAAVIINKENNPRGTRVFGPIARELRDKDFTKIVSLAPEVL.

It belongs to the universal ribosomal protein uL14 family. Part of the 50S ribosomal subunit.

Its subcellular location is the plastid. It is found in the chloroplast. Functionally, binds to 23S rRNA. The protein is Large ribosomal subunit protein uL14c of Guillardia theta (Cryptophyte).